The following is a 185-amino-acid chain: Elongation factor P (185 aa).

The protein belongs to the elongation factor P family.

It is found in the cytoplasm. Its pathway is protein biosynthesis; polypeptide chain elongation. Its function is as follows. Involved in peptide bond synthesis. Stimulates efficient translation and peptide-bond synthesis on native or reconstituted 70S ribosomes in vitro. Probably functions indirectly by altering the affinity of the ribosome for aminoacyl-tRNA, thus increasing their reactivity as acceptors for peptidyl transferase. The sequence is that of Elongation factor P from Pseudothermotoga lettingae (strain ATCC BAA-301 / DSM 14385 / NBRC 107922 / TMO) (Thermotoga lettingae).